A 502-amino-acid chain; its full sequence is Glutamate--tRNA ligase (502 aa).

The 'HIGH' region motif lies at 12–22 (PSPTGYLHVGG). Positions 259–263 (KLSKR) match the 'KMSKS' region motif. Residue Lys-262 participates in ATP binding.

This sequence belongs to the class-I aminoacyl-tRNA synthetase family. Glutamate--tRNA ligase type 1 subfamily. In terms of assembly, monomer.

It localises to the cytoplasm. The catalysed reaction is tRNA(Glu) + L-glutamate + ATP = L-glutamyl-tRNA(Glu) + AMP + diphosphate. Catalyzes the attachment of glutamate to tRNA(Glu) in a two-step reaction: glutamate is first activated by ATP to form Glu-AMP and then transferred to the acceptor end of tRNA(Glu). In Chlorobium chlorochromatii (strain CaD3), this protein is Glutamate--tRNA ligase.